A 128-amino-acid chain; its full sequence is Fluoride-specific ion channel FluC (128 aa).

4 helical membrane passes run 2–22, 37–57, 65–85, and 101–121; these read LTFA…GAWL, WGTL…VALI, AWIR…FSTF, and AAAY…LGLA. 2 residues coordinate Na(+): glycine 77 and threonine 80.

The protein belongs to the fluoride channel Fluc/FEX (TC 1.A.43) family.

It localises to the cell inner membrane. It carries out the reaction fluoride(in) = fluoride(out). With respect to regulation, na(+) is not transported, but it plays an essential structural role and its presence is essential for fluoride channel function. Its function is as follows. Fluoride-specific ion channel. Important for reducing fluoride concentration in the cell, thus reducing its toxicity. The protein is Fluoride-specific ion channel FluC of Bordetella bronchiseptica (strain ATCC BAA-588 / NCTC 13252 / RB50) (Alcaligenes bronchisepticus).